The chain runs to 243 residues: Complement C1q tumor necrosis factor-related protein 5 (243 aa).

The signal sequence occupies residues 1 to 15 (MRPLLVLLLLGLAAG). The disordered stretch occupies residues 15–125 (GSPPLDDNKI…PPPSDAPLPF (111 aa)). One can recognise a Collagen-like domain in the interval 30-95 (GHPGLPGTPG…AGPAGPTGPA (66 aa)). The segment covering 83–96 (RGEAGPAGPTGPAG) has biased composition (low complexity). Positions 99 to 238 (SVPPRSAFSA…GFLVYSDWHS (140 aa)) constitute a C1q domain.

As to quaternary structure, may interact with ERFE. Homotrimer (via collagen-like domain). May form higher order oligomers by supercoiling of the trimers.

The protein resides in the secreted. This chain is Complement C1q tumor necrosis factor-related protein 5 (C1QTNF5), found in Homo sapiens (Human).